A 147-amino-acid polypeptide reads, in one-letter code: Transthyretin (147 aa).

Residues 1-20 (MASHRLLLLCLAGLVFVSEA) form the signal peptide. Cys-30 is modified (sulfocysteine). Lys-35 provides a ligand contact to L-thyroxine. The residue at position 62 (Glu-62) is a 4-carboxyglutamate; in a patient with Moyamoya disease. Position 72 is a phosphoserine (Ser-72). Position 74 (Glu-74) interacts with L-thyroxine. Asn-118 carries N-linked (GlcNAc...) asparagine glycosylation. L-thyroxine is bound at residue Ser-137.

This sequence belongs to the transthyretin family. In terms of assembly, homotetramer. Dimer of dimers. In the homotetramer, subunits assemble around a central channel that can accommodate two ligand molecules. Interacts with RBP4. Not glycosylated under normal conditions. Following unfolding, caused for example by variant AMYLD1 'Gly-38', the cryptic Asn-118 site is exposed and glycosylated by STT3B-containing OST complex, leading to its degradation by the ER-associated degradation (ERAD) pathway. In terms of processing, sulfonation of the reactive cysteine Cys-30 enhances the stability of the native conformation of TTR, avoiding misassembly of the protein leading to amyloid formation. In terms of tissue distribution, detected in serum and cerebrospinal fluid (at protein level). Highly expressed in choroid plexus epithelial cells. Detected in retina pigment epithelium and liver.

The protein localises to the secreted. It is found in the cytoplasm. Thyroid hormone-binding protein. Probably transports thyroxine from the bloodstream to the brain. The chain is Transthyretin (TTR) from Homo sapiens (Human).